The chain runs to 248 residues: 5'-nucleotidase SurE (248 aa).

Positions 8, 9, 39, and 92 each coordinate a divalent metal cation.

Belongs to the SurE nucleotidase family. A divalent metal cation is required as a cofactor.

The protein localises to the cytoplasm. It carries out the reaction a ribonucleoside 5'-phosphate + H2O = a ribonucleoside + phosphate. Its function is as follows. Nucleotidase that shows phosphatase activity on nucleoside 5'-monophosphates. In Tolumonas auensis (strain DSM 9187 / NBRC 110442 / TA 4), this protein is 5'-nucleotidase SurE.